Consider the following 76-residue polypeptide: Small proline-rich protein 2G (76 aa).

A run of 3 repeats spans residues 21–29 (PKCPEPCPL), 30–38 (PKCPEPCPP), and 39–47 (PKCPEPCPE). Residues 21-47 (PKCPEPCPLPKCPEPCPPPKCPEPCPE) form a 3 X 9 AA approximate tandem repeats region. Positions 55–76 (QQKCPPVQTPPPCQQKCPPKSK) are disordered.

This sequence belongs to the cornifin (SPRR) family. Expressed in uterus.

It localises to the cytoplasm. Functionally, cross-linked envelope protein of keratinocytes. It is a keratinocyte protein that first appears in the cell cytosol, but ultimately becomes cross-linked to membrane proteins by transglutaminase. All that results in the formation of an insoluble envelope beneath the plasma membrane. This is Small proline-rich protein 2G (Sprr2g) from Mus musculus (Mouse).